Here is a 206-residue protein sequence, read N- to C-terminus: Small ribosomal subunit protein uS2 (206 aa).

It belongs to the universal ribosomal protein uS2 family.

This Pyrobaculum neutrophilum (strain DSM 2338 / JCM 9278 / NBRC 100436 / V24Sta) (Thermoproteus neutrophilus) protein is Small ribosomal subunit protein uS2.